A 462-amino-acid chain; its full sequence is Fez family zinc finger protein 1 (462 aa).

An Engrailed homology 1 repressor motif is present at residues 34–49; that stretch reads PLAFSIERIMSRTPEP. C2H2-type zinc fingers lie at residues 260 to 282, 288 to 310, 316 to 338, 344 to 366, 372 to 394, and 400 to 423; these read FTCE…MPVH, FVCK…KIIH, HKCN…TRIH, FVCE…KLTH, FKCN…MHTH, and FTCP…RKLH. Residues 441–462 form a disordered region; that stretch reads LLLPNREPSPTIQSPQLQKSGY. The span at 448–462 shows a compositional bias: polar residues; it reads PSPTIQSPQLQKSGY.

Belongs to the krueppel C2H2-type zinc-finger protein family.

The protein resides in the nucleus. Transcription repressor. Involved in the development of the forebrain region. This chain is Fez family zinc finger protein 1 (fezf1), found in Xenopus tropicalis (Western clawed frog).